The chain runs to 437 residues: Type II methyltransferase M.HgiCII (437 aa).

In terms of domain architecture, SAM-dependent MTase C5-type spans 4-431 (FRFIDLFAGI…KALPNDHLFE (428 aa)). Residue Cys-75 is part of the active site.

It belongs to the class I-like SAM-binding methyltransferase superfamily. C5-methyltransferase family.

The catalysed reaction is a 2'-deoxycytidine in DNA + S-adenosyl-L-methionine = a 5-methyl-2'-deoxycytidine in DNA + S-adenosyl-L-homocysteine + H(+). In terms of biological role, a methylase that recognizes the double-stranded sequence 5'-GGWCC-3', methylates C-? on both strands and protects the DNA from cleavage by the HgiCII endonuclease. This chain is Type II methyltransferase M.HgiCII, found in Herpetosiphon aurantiacus (Herpetosiphon giganteus).